Reading from the N-terminus, the 76-residue chain is MIFEKIKDLIATQLSLDTSTITLDTRFKEDLGLDSLDALELVMEAEKTFQINISDATLQNFKTVQDIVFYITKNTS.

In terms of domain architecture, Carrier spans 1-75 (MIFEKIKDLI…DIVFYITKNT (75 aa)). Ser-35 bears the O-(pantetheine 4'-phosphoryl)serine mark.

This sequence belongs to the acyl carrier protein (ACP) family. 4'-phosphopantetheine is transferred from CoA to a specific serine of apo-ACP by AcpS. This modification is essential for activity because fatty acids are bound in thioester linkage to the sulfhydryl of the prosthetic group.

It is found in the cytoplasm. Its pathway is lipid metabolism; fatty acid biosynthesis. In terms of biological role, carrier of the growing fatty acid chain in fatty acid biosynthesis. This is Acyl carrier protein from Aster yellows witches'-broom phytoplasma (strain AYWB).